Here is a 287-residue protein sequence, read N- to C-terminus: Probable endonuclease 4 (287 aa).

Zn(2+)-binding residues include His-69, His-109, Glu-144, Asp-178, His-181, His-215, Asp-228, His-230, and Glu-260.

It belongs to the AP endonuclease 2 family. It depends on Zn(2+) as a cofactor.

The catalysed reaction is Endonucleolytic cleavage to 5'-phosphooligonucleotide end-products.. Its function is as follows. Endonuclease IV plays a role in DNA repair. It cleaves phosphodiester bonds at apurinic or apyrimidinic (AP) sites, generating a 3'-hydroxyl group and a 5'-terminal sugar phosphate. This Thermotoga maritima (strain ATCC 43589 / DSM 3109 / JCM 10099 / NBRC 100826 / MSB8) protein is Probable endonuclease 4.